The chain runs to 269 residues: Thymidylate synthase (269 aa).

Residue R26 coordinates dUMP. Residue H56 participates in (6R)-5,10-methylene-5,6,7,8-tetrahydrofolate binding. 131–132 (RR) provides a ligand contact to dUMP. C151 serves as the catalytic Nucleophile. DUMP contacts are provided by residues 171-174 (RSAD), N182, and 212-214 (HIY). Residue D174 participates in (6R)-5,10-methylene-5,6,7,8-tetrahydrofolate binding. Position 268 (A268) interacts with (6R)-5,10-methylene-5,6,7,8-tetrahydrofolate.

It belongs to the thymidylate synthase family. Bacterial-type ThyA subfamily. As to quaternary structure, homodimer.

The protein resides in the cytoplasm. It carries out the reaction dUMP + (6R)-5,10-methylene-5,6,7,8-tetrahydrofolate = 7,8-dihydrofolate + dTMP. Its pathway is pyrimidine metabolism; dTTP biosynthesis. Its function is as follows. Catalyzes the reductive methylation of 2'-deoxyuridine-5'-monophosphate (dUMP) to 2'-deoxythymidine-5'-monophosphate (dTMP) while utilizing 5,10-methylenetetrahydrofolate (mTHF) as the methyl donor and reductant in the reaction, yielding dihydrofolate (DHF) as a by-product. This enzymatic reaction provides an intracellular de novo source of dTMP, an essential precursor for DNA biosynthesis. The protein is Thymidylate synthase of Leifsonia xyli subsp. xyli (strain CTCB07).